Here is a 49-residue protein sequence, read N- to C-terminus: Large ribosomal subunit protein bL33B (49 aa).

Belongs to the bacterial ribosomal protein bL33 family.

The chain is Large ribosomal subunit protein bL33B from Lactobacillus helveticus (strain DPC 4571).